A 243-amino-acid polypeptide reads, in one-letter code: Venom nerve growth factor 1 (243 aa).

The first 18 residues, 1-18, serve as a signal peptide directing secretion; that stretch reads MSMLCYTLIIAFLIGIWA. A propeptide spanning residues 19–125 is cleaved from the precursor; it reads APKSEDNVPL…TLNRNIRAKR (107 aa). Residues 47–66 show a composition bias toward basic and acidic residues; that stretch reads GLKTSRNTDQRHPAPKKAED. Residues 47–69 form a disordered region; sequence GLKTSRNTDQRHPAPKKAEDQEL. Cystine bridges form between Cys-139–Cys-204, Cys-182–Cys-232, and Cys-192–Cys-234. N-linked (GlcNAc...) asparagine glycosylation is present at Asn-148.

The protein belongs to the NGF-beta family. In terms of assembly, homodimer; non-covalently linked. As to expression, expressed by the venom gland.

The protein localises to the secreted. Functionally, nerve growth factor is important for the development and maintenance of the sympathetic and sensory nervous systems. It stimulates division and differentiation of sympathetic and embryonic sensory neurons as well as basal forebrain cholinergic neurons in the brain. Its relevance in the snake venom is not clear. However, it has been shown to inhibit metalloproteinase-dependent proteolysis of platelet glycoprotein Ib alpha, suggesting a metalloproteinase inhibition to prevent metalloprotease autodigestion and/or protection against prey proteases. Binds a lipid between the two protein chains in the homodimer. The lipid-bound form promotes histamine relase from mouse mast cells, contrary to the lipid-free form. The chain is Venom nerve growth factor 1 from Oxyuranus microlepidotus (Inland taipan).